We begin with the raw amino-acid sequence, 259 residues long: Chaplin-C (259 aa).

The N-terminal stretch at 1-28 (MRQATRKGLMTMAAATGVIAAAGGAAHA) is a signal peptide. The Chaplin 1 domain occupies 39–79 (SPGVLSGNTVQAPVHVPVNVCGNTVDVVGVLNPAMGNACAN). Residues 84-112 (ASGGHGGHGGHGGYGDSGGEGGSHGGSHA) are compositionally biased toward gly residues. Disordered stretches follow at residues 84–129 (ASGG…NHVE) and 154–227 (GNDC…ALAE). The Chaplin 2 domain occupies 119 to 159 (SPGVGSGNHVEVPIDVPVNVCGNSIDVVGALNPTTGNDCGN). Over residues 180 to 189 (HNPGNPGNPD) the composition is skewed to low complexity. The LPXTG sorting signal motif lies at 225–229 (LAETG). Pentaglycyl murein peptidoglycan amidated threonine is present on threonine 228. A propeptide spans 229–259 (GSDLPLGLALPVGAGALLAGTVLYRKARASV) (removed by sortase).

This sequence belongs to the chaplin family. Long chaplin subfamily.

The protein resides in the secreted. The protein localises to the cell wall. In terms of biological role, one of 8 partially redundant surface-active proteins required for efficient formation of aerial mycelium; the short chaplins assemble into a hydrophobic, amyloidal fibrillar surface layer that envelopes and protects aerial hyphae and spores, presumably anchored to the long chaplins. Chaplins have an overlapping function with the surface-active SapB peptide; chaplins are essential on minimal medium while on rich medium both chaplins and SapB are required for efficient aerial hyphae formation. A minimal chaplin strain capable of forming aerial mycelium/hyphae on minimal medium contains ChpC, ChpE and ChpH. The strain also has restored rodlet formation on the hyphae surface. The long chaplins (ChpA, ChpB, ChpC) are not absolutely necessary for short chaplin localization or rodlet formation, but probably play a role in initiating aerial hyphae development. Chaplins are also involved in cell attachment to a hydrophobic surface. In Streptomyces coelicolor (strain ATCC BAA-471 / A3(2) / M145), this protein is Chaplin-C.